The chain runs to 335 residues: Nuclear envelope-associated protein 2 (335 aa).

Coiled-coil stretches lie at residues arginine 55–alanine 85 and cysteine 125–lysine 260. The Bipartite nuclear localization signal signature appears at lysine 239–lysine 260. The chain crosses the membrane as a helical span at residues phenylalanine 312–leucine 329.

Forms homomers and heteromers with NEAP1 and NEAP3. Interacts with SUN1 and SUN2.

It is found in the nucleus inner membrane. The protein resides in the nucleus. It localises to the nucleoplasm. In Arabidopsis thaliana (Mouse-ear cress), this protein is Nuclear envelope-associated protein 2.